A 191-amino-acid polypeptide reads, in one-letter code: 3-isopropylmalate dehydratase small subunit (191 aa).

Belongs to the LeuD family. LeuD type 1 subfamily. In terms of assembly, heterodimer of LeuC and LeuD.

It catalyses the reaction (2R,3S)-3-isopropylmalate = (2S)-2-isopropylmalate. It functions in the pathway amino-acid biosynthesis; L-leucine biosynthesis; L-leucine from 3-methyl-2-oxobutanoate: step 2/4. Functionally, catalyzes the isomerization between 2-isopropylmalate and 3-isopropylmalate, via the formation of 2-isopropylmaleate. The sequence is that of 3-isopropylmalate dehydratase small subunit from Anaeromyxobacter dehalogenans (strain 2CP-C).